Consider the following 247-residue polypeptide: Segregation and condensation protein A (247 aa).

This sequence belongs to the ScpA family. Component of a cohesin-like complex composed of ScpA, ScpB and the Smc homodimer, in which ScpA and ScpB bind to the head domain of Smc. The presence of the three proteins is required for the association of the complex with DNA.

Its subcellular location is the cytoplasm. In terms of biological role, participates in chromosomal partition during cell division. May act via the formation of a condensin-like complex containing Smc and ScpB that pull DNA away from mid-cell into both cell halves. This chain is Segregation and condensation protein A, found in Bacillus cereus (strain AH187).